The primary structure comprises 233 residues: Achaete-scute homolog 1 (233 aa).

Disordered regions lie at residues 1-24 (MESS…FLPP) and 39-95 (AAAA…ELMR). The segment covering 39 to 62 (AAAAAAQSAQQQQQQQAPQQQAPQ) has biased composition (low complexity). A compositionally biased stretch (basic residues) spans 78–87 (SAAKQVKRQR). The 53-residue stretch at 115-167 (AAVARRNERERNRVKLVNLGFATLREHVPNGAANKKMSKVETLRSAVEYIRAL) folds into the bHLH domain. Lys153 carries the N6-acetyllysine modification.

As to quaternary structure, efficient DNA binding requires dimerization with another bHLH protein. Forms a heterodimer with TCF3. In terms of tissue distribution, developing CNS and PNS at embryonic and postnatal stages.

It is found in the nucleus. Transcription factor that plays a key role in neuronal differentiation: acts as a pioneer transcription factor, accessing closed chromatin to allow other factors to bind and activate neural pathways. Directly binds the E box motif (5'-CANNTG-3') on promoters and promotes transcription of neuronal genes. The combination of three transcription factors, ASCL1, POU3F2/BRN2 and MYT1L, is sufficient to reprogram fibroblasts and other somatic cells into induced neuronal (iN) cells in vitro. Plays a role at early stages of development of specific neural lineages in most regions of the CNS, and of several lineages in the PNS. Essential for the generation of olfactory and autonomic neurons. Acts synergistically with FOXN4 to specify the identity of V2b neurons rather than V2a from bipotential p2 progenitors during spinal cord neurogenesis, probably through DLL4-NOTCH signaling activation. Involved in the regulation of neuroendocrine cell development in the glandular stomach. This Rattus norvegicus (Rat) protein is Achaete-scute homolog 1 (Ascl1).